Reading from the N-terminus, the 427-residue chain is MTLVTAGGAWTGPGCWHEVKDEESSSEQSISIAVSHVNTSKAGLPAQTALPCDICGPILKDILHLDEHQGTHHGLKLHTCGACGRQFWFSANLHQYQKCYSIEQPLRRDKSEASIVKNCTVSKEPHPSEKPFTCKEEQKNFQATLGGCQQKAIHSKRKTHRSTESGDAFHGEQMHYKCSECGKAFSRKDTLVQHQRIHSGEKPYECSECGKAFSRKATLVQHQRIHTGERPYECSECGKTFSRKDNLTQHKRIHTGEMPYKCNECGKYFSHHSNLIVHQRVHNGARPYKCSDCGKVFRHKSTLVQHESIHTGENPYDCSDCGKSFGHKYTLIKHQRIHTESKPFECIECGKFFSRSSDYIAHQRVHTGERPFVCSKCGKDFIRTSHLVRHQRVHTGERPYECSECGKAYSLSSHLNRHQKVHTAGRL.

K20 participates in a covalent cross-link: Glycyl lysine isopeptide (Lys-Gly) (interchain with G-Cter in SUMO2). The segment at 50 to 72 (LPCDICGPILKDILHLDEHQGTH) adopts a C2H2-type 1 zinc-finger fold. The C2H2-type 2; degenerate zinc-finger motif lies at 78–100 (HTCGACGRQFWFSANLHQYQKCY). Glycyl lysine isopeptide (Lys-Gly) (interchain with G-Cter in SUMO2) cross-links involve residues K135 and K139. 9 C2H2-type zinc fingers span residues 176 to 198 (YKCSECGKAFSRKDTLVQHQRIH), 204 to 226 (YECSECGKAFSRKATLVQHQRIH), 232 to 254 (YECSECGKTFSRKDNLTQHKRIH), 260 to 282 (YKCNECGKYFSHHSNLIVHQRVH), 288 to 310 (YKCSDCGKVFRHKSTLVQHESIH), 316 to 338 (YDCSDCGKSFGHKYTLIKHQRIH), 344 to 366 (FECIECGKFFSRSSDYIAHQRVH), 372 to 394 (FVCSKCGKDFIRTSHLVRHQRVH), and 400 to 422 (YECSECGKAYSLSSHLNRHQKVH).

Belongs to the krueppel C2H2-type zinc-finger protein family.

It is found in the nucleus. Functionally, may be involved in transcriptional regulation. The sequence is that of Zinc finger protein 134 (ZNF134) from Homo sapiens (Human).